The primary structure comprises 183 residues: MPVAAIIREEIEIPESVTIEVINNEEVVVKAGGKELRRILSYPDVVIKKEDNKVVVESLYPRKKQAAIIGTFASHIKNIITGVSEGFEYKMKIRYAHFPMKISVKGNEVIIDNFLGEKHPRKATIMEGVKVKVSGEDVIVTGIDKEKTGQTAANIEQATRVRGRDTRVFQDGIYIVEKAGKVL.

Belongs to the universal ribosomal protein uL6 family. As to quaternary structure, part of the 50S ribosomal subunit.

Its function is as follows. This protein binds to the 23S rRNA, and is important in its secondary structure. It is located near the subunit interface in the base of the L7/L12 stalk, and near the tRNA binding site of the peptidyltransferase center. This chain is Large ribosomal subunit protein uL6, found in Methanococcus aeolicus (strain ATCC BAA-1280 / DSM 17508 / OCM 812 / Nankai-3).